The following is a 328-amino-acid chain: Dihydroorotate dehydrogenase (quinone), mitochondrial (328 aa).

Residues 21–38 (AHGLSIAGLKTGLVTGSA) traverse the membrane as a helical segment. FMN-binding positions include 61 to 65 (AGYDK) and T85. K65 is a substrate binding site. 110-114 (NRLGF) is a substrate binding site. FMN is bound by residues N139 and N170. 170-175 (NISSPN) serves as a coordination point for substrate. S173 serves as the catalytic Nucleophile. FMN-binding residues include K215 and S243. 244–245 (NT) provides a ligand contact to substrate. The FMN site is built by G266 and G295.

The protein belongs to the dihydroorotate dehydrogenase family. Type 2 subfamily. The cofactor is FMN.

It localises to the mitochondrion inner membrane. It catalyses the reaction (S)-dihydroorotate + a quinone = orotate + a quinol. It functions in the pathway pyrimidine metabolism; UMP biosynthesis via de novo pathway; orotate from (S)-dihydroorotate (quinone route): step 1/1. Its function is as follows. Catalyzes the conversion of dihydroorotate to orotate with quinone as electron acceptor. The protein is Dihydroorotate dehydrogenase (quinone), mitochondrial (URA1) of Cyclocybe aegerita (Black poplar mushroom).